The primary structure comprises 78 residues: Large ribosomal subunit protein bL28 (78 aa).

Residues 1–21 (MSRVCQVTGKRPMSGNNRSHA) are disordered.

Belongs to the bacterial ribosomal protein bL28 family.

The protein is Large ribosomal subunit protein bL28 of Photorhabdus laumondii subsp. laumondii (strain DSM 15139 / CIP 105565 / TT01) (Photorhabdus luminescens subsp. laumondii).